We begin with the raw amino-acid sequence, 972 residues long: N-alpha-acetyltransferase 25, NatB auxiliary subunit (972 aa).

4 TPR repeats span residues 11 to 44, 45 to 78, 79 to 112, and 114 to 146; these read NDRRLRPIYDYLDNGNNKMAIQQADKLLKKHKDL, HCAKVLKAIGLQRTGKQEEAFTLAQEVAALEPTD, DNSLQALTILYREMHRPELVTKLYEAAVKKVPNS, and EYHSHLFMAYARVGEYKKMQQAGMALYKIVPKN.

Belongs to the MDM20/NAA25 family. In terms of assembly, component of the N-terminal acetyltransferase B (NatB) complex which is composed of NAA20 and NAA25.

It localises to the cytoplasm. Functionally, non-catalytic subunit of the NatB complex which catalyzes acetylation of the N-terminal methionine residues of peptides beginning with Met-Asp, Met-Glu, Met-Asn and Met-Gln. May play a role in normal cell-cycle progression. The polypeptide is N-alpha-acetyltransferase 25, NatB auxiliary subunit (NAA25) (Homo sapiens (Human)).